The chain runs to 234 residues: Phosphoribosylaminoimidazole-succinocarboxamide synthase (234 aa).

This sequence belongs to the SAICAR synthetase family.

The catalysed reaction is 5-amino-1-(5-phospho-D-ribosyl)imidazole-4-carboxylate + L-aspartate + ATP = (2S)-2-[5-amino-1-(5-phospho-beta-D-ribosyl)imidazole-4-carboxamido]succinate + ADP + phosphate + 2 H(+). It functions in the pathway purine metabolism; IMP biosynthesis via de novo pathway; 5-amino-1-(5-phospho-D-ribosyl)imidazole-4-carboxamide from 5-amino-1-(5-phospho-D-ribosyl)imidazole-4-carboxylate: step 1/2. This is Phosphoribosylaminoimidazole-succinocarboxamide synthase from Clostridium botulinum (strain Okra / Type B1).